Reading from the N-terminus, the 297-residue chain is Magnetosome protein MamB (297 aa).

Over methionine 1 to glutamate 12 the chain is Cytoplasmic. Residues methionine 1–glutamate 214 form a transmembrane domain (TMD) region. Residues valine 13 to leucine 33 traverse the membrane as a helical segment. The Lumenal portion of the chain corresponds to methionine 34–serine 83. Residues serine 84–valine 104 form a helical membrane-spanning segment. At lysine 105–glutamate 112 the chain is on the cytoplasmic side. A helical transmembrane segment spans residues alanine 113 to tyrosine 133. Over arginine 134–alanine 164 the chain is Lumenal. Residues valine 165–isoleucine 185 form a helical membrane-spanning segment. The Cytoplasmic segment spans residues glycine 186–valine 297. The tract at residues leucine 215–valine 297 is C-terminal domain (CTD).

It belongs to the cation diffusion facilitator (CDF) transporter (TC 2.A.4) family. In terms of assembly, forms homodimers via its C-terminal domain, may form higher order multimers that are sensitive to reducing agent. Probably interacts with MamE. Interacts with MamM via their C-terminal domains.

It is found in the cell inner membrane. It localises to the magnetosome membrane. In terms of biological role, plays a dual, essential role in magnetosome formation; required for magnetosome vesicle formation as well as biomineralization. Requires heterodimerization with MamM for stability. Probably binds and transports iron. One of 7 genes (mamLQBIEMO) able to induce magnetosome membrane biogenesis; coexpression of mamLQRBIEMO in a deletion of the 17 gene mamAB operon restores magnetosome vesicle formation but not magnetite biosynthesis. This chain is Magnetosome protein MamB, found in Magnetospirillum gryphiswaldense (strain DSM 6361 / JCM 21280 / NBRC 15271 / MSR-1).